Consider the following 596-residue polypeptide: Bromodomain-containing protein 9 (596 aa).

The segment covering 1–10 (MGKKHKKHKS) has biased composition (basic residues). Disordered stretches follow at residues 1 to 31 (MGKK…QYYV) and 49 to 119 (EVTE…SEGE). The span at 61–73 (SFYEDRSDHERER) shows a compositional bias: basic and acidic residues. The span at 74-84 (HKEKKKKKKKK) shows a compositional bias: basic residues. A compositionally biased stretch (basic and acidic residues) spans 85 to 98 (SEKEKDKYLDEDER). The segment covering 99–109 (RRRKEEKKRKR) has biased composition (basic residues). A Bromo domain is found at 148-252 (NESTPLQQLL…HTGFKMMSKQ (105 aa)). Positions 226–228 (TYN) are histone H4K5ac H4K8ac and histone H4K5bu H4K8bu binding. The span at 537-547 (DFHDVHNDRGG) shows a compositional bias: basic and acidic residues. The disordered stretch occupies residues 537–596 (DFHDVHNDRGGSRPSSSSSVSNNSERDHHLGSPSRISVGEQQDIHDPYEFLQSPETENQN). Low complexity predominate over residues 548–559 (SRPSSSSSVSNN).

In terms of assembly, binds acetylated histones H3 and H4. Binds butyrylated histone H4.

It localises to the nucleus. Plays a role in chromatin remodeling and regulation of transcription. Acts as a chromatin reader that recognizes and binds acylated histones: binds histones that are acetylated and/or butyrylated. The protein is Bromodomain-containing protein 9 (brd9) of Xenopus tropicalis (Western clawed frog).